The primary structure comprises 491 residues: Trigger factor (491 aa).

One can recognise a PPIase FKBP-type domain in the interval 169–254; it reads GDRVTIDYLG…VKDVAAAAPI (86 aa). A disordered region spans residues 434-491; the sequence is KVSKEELTAEDDADEKPAKKTASKKKAAAKADAAEGEEAAAPKRKAPAKKKASDESAE. The span at 452 to 461 shows a compositional bias: basic residues; the sequence is KKTASKKKAA.

Belongs to the FKBP-type PPIase family. Tig subfamily.

It localises to the cytoplasm. The enzyme catalyses [protein]-peptidylproline (omega=180) = [protein]-peptidylproline (omega=0). Its function is as follows. Involved in protein export. Acts as a chaperone by maintaining the newly synthesized protein in an open conformation. Functions as a peptidyl-prolyl cis-trans isomerase. The chain is Trigger factor from Sinorhizobium medicae (strain WSM419) (Ensifer medicae).